The following is a 267-amino-acid chain: Transcription factor Spi-B (267 aa).

The tract at residues 1-31 (MLALEAAQLDGPHLSCLYPEGVFYDLDSCKP) is TAD1 (Acidic). The TAD2 stretch occupies residues 41–62 (LDSTWGWTEAPPAPAIAPYEAF). Residues 174–257 (LRLYQFLLGL…VKRKLTYQFD (84 aa)) constitute a DNA-binding region (ETS).

The protein belongs to the ETS family. Can form homotypic interactions. Interacts with IRF4/Pip. Interacts with JUN. Interacts with TBP. May also interact with CREBBP and EP300. Interacts with NONO/p54(nrb). In terms of tissue distribution, expressed in the medulla of the thymus, the spleen and germinal centers of the lymph nodes. Expressed in B-cells and T-cells, expression increases during B-cell maturation and decreases during T-cell maturation.

It localises to the nucleus. Sequence specific transcriptional activator which binds to the PU-box, a purine-rich DNA sequence (5'-GAGGAA-3') that can act as a lymphoid-specific enhancer. Promotes development of plasmacytoid dendritic cells (pDCs), also known as type 2 DC precursors (pre-DC2) or natural interferon (IFN)-producing cells. These cells have the capacity to produce large amounts of interferon and block viral replication. Required for B-cell receptor (BCR) signaling, which is necessary for normal B-cell development and antigenic stimulation. The sequence is that of Transcription factor Spi-B (Spib) from Mus musculus (Mouse).